An 839-amino-acid polypeptide reads, in one-letter code: Oligopeptide transporter phomP2 (839 aa).

The disordered stretch occupies residues 1–58; that stretch reads MEADPKVPFTDEMNIQDEHNWESGSWSSSRRSNDSNVTLLSRRSSVEQHEDERQKDSD. Low complexity predominate over residues 23–36; that stretch reads SGSWSSSRRSNDSN. Asparagine 33 and asparagine 36 each carry an N-linked (GlcNAc...) asparagine glycan. The span at 44–58 shows a compositional bias: basic and acidic residues; it reads SSVEQHEDERQKDSD. 6 helical membrane passes run 105–125, 177–197, 210–230, 268–288, 315–335, and 345–365; these read VWLL…VYYF, ALVV…GPLS, PWAI…VGLY, VFMA…FVFP, GFGL…SPLF, and FVGA…SDAL. N-linked (GlcNAc...) asparagine glycans are attached at residues asparagine 386 and asparagine 398. 4 consecutive transmembrane segments (helical) span residues 415–435, 478–498, 505–525, and 585–605; these read AMHF…AVLF, AWYA…LYAG, WGLQ…GMLF, and WELL…NWAV. Residues 629–646 are compositionally biased toward gly residues; the sequence is QGLGLGQGGGGGGGGGGQ. The disordered stretch occupies residues 629 to 654; it reads QGLGLGQGGGGGGGGGGQQQRAAGAH. 3 consecutive transmembrane segments (helical) span residues 665 to 685, 697 to 717, and 728 to 748; these read NFFS…FGGG, WLLP…WLIH, and WPLH…FPTT. The N-linked (GlcNAc...) asparagine glycan is linked to asparagine 749. Residues 781–801 form a helical membrane-spanning segment; it reads AGLDCGAQLVQMVLGVAFLVF.

It belongs to the oligopeptide OPT transporter family.

It localises to the membrane. Its function is as follows. Oligopeptide transporter; part of the gene cluster that mediates the biosynthesis of the phomopsins, a group of hexapeptide mycotoxins which infects lupins and causes lupinosis disease in livestock. The protein is Oligopeptide transporter phomP2 of Diaporthe leptostromiformis (Lupinosis disease fungus).